A 690-amino-acid polypeptide reads, in one-letter code: CREB-H transcription factor homolog let-607 (690 aa).

Disordered regions lie at residues 87–118 (NDNCYSLSPPDSGSLPISPASTSPSSYHSSGG), 166–192 (SAVHQNQQQQQRRLNQAGFPHQNSNGL), and 205–253 (PASI…KYPP). Composition is skewed to low complexity over residues 100–116 (SLPISPASTSPSSYHSS), 170–181 (QNQQQQQRRLNQ), and 213–236 (PSSSFNPQSTSSTPATSSSSSSST). Positions 284-347 (DLKRIRRKIR…QSVISQLKKL (64 aa)) constitute a bZIP domain. The tract at residues 286 to 321 (KRIRRKIRNKRSAQTSRKRKQDYIEQLEDRVSESTK) is basic motif. A coiled-coil region spans residues 295-350 (KRSAQTSRKRKQDYIEQLEDRVSESTKENQALKQQIERLSSENQSVISQLKKLQAQ). Residues 326–333 (LKQQIERL) form a leucine-zipper region. Residues 451 to 464 (HNNSKYPASGNQNH) are compositionally biased toward polar residues. Disordered stretches follow at residues 451 to 495 (HNNS…SMYR) and 509 to 536 (GARKGSSTSSSSASSVASSTSTSSATSP). Low complexity-rich tracts occupy residues 480–492 (QPKQSYQQQHQPS) and 514–535 (SSTSSSSASSVASSTSTSSATS).

It belongs to the bZIP family.

It is found in the nucleus. Functionally, probable transcription factor, required during migration of the gonadal distal tip cells (DTC). Probably regulates cell adhesion of DTCs via modulation of expression of genes involved in integrin-mediated adhesion, including tln-1, src-1, and integrin pat-2. Modulates expression of genes involved in protein trafficking during embryogenesis, including emo-1, sec-61, calu-1, sec-24.1, enpl-1, sar-1 and tfg-1. The polypeptide is CREB-H transcription factor homolog let-607 (Caenorhabditis elegans).